A 559-amino-acid chain; its full sequence is MSATSVDPQRTKGQDNKVQNGSLHQKDAVHDNDFEPYLSGQSNPSNSYPSMSDPYLSSYYPPSIGFPYSLSEAPWSTAGDPPIPYLTTYGQLSNGDHHFMHDAVFGQPGGLGNNIYQHRFNFFPENPAFSAWGTSGSQGQQTQSSAYGSSYTYPPSSLGGTVVDGQTGFHSDSLNKAPGMNSLEQGMVGLKIGDVTTSAVKTVGSVVNSVALTGVLSGNGGTNVNMPVSKPTSWAAIASKPAKPQPKMKTKSGPIVGGALPPPPIKHNMDIGTWDNKGPAPKASAPQQTPSPQAAPQPQQVAQPLPVQPPPLVQPQYQSPQQPLQPRWVAPRNRNAAFGQSGGANSDSNSVGNAQPTSAPSVESHPVLEKLKAAHSYNPKEFDWNLKSGRVFIIKSYSEDDIHRSIKYSIWCSTEHGNKRLDGAFRSMSSKGPVYLLFSVNGSGHFCGVAEMKSPVDYGTSAGVWSQDKWKGKFDVKWIFVKDVPNNQLRHIRLENNDNKPVTNSRDTQEVPLEKAKQVLKIIASYKHTTSIFDDFSHYEKRQEEEEVVRKERQNRNKQ.

The tract at residues 1–49 is disordered; that stretch reads MSATSVDPQRTKGQDNKVQNGSLHQKDAVHDNDFEPYLSGQSNPSNSYP. Serine 2 is modified (N-acetylserine). Residues 24–33 show a composition bias toward basic and acidic residues; sequence HQKDAVHDND. A Phosphoserine modification is found at serine 182. The interval 239–365 is disordered; that stretch reads SKPAKPQPKM…PTSAPSVESH (127 aa). 2 stretches are compositionally biased toward low complexity: residues 279–305 and 314–326; these read PAPK…AQPL and QPQY…PLQP. The segment covering 343–361 has biased composition (polar residues); it reads GANSDSNSVGNAQPTSAPS. A YTH domain is found at 389–523; the sequence is GRVFIIKSYS…EKAKQVLKII (135 aa). RNA is bound by residues 395–397, aspartate 401, 411–412, asparagine 441, tryptophan 465, and tryptophan 470; these read KSY and WC.

It belongs to the YTHDF family. YTHDF1 subfamily. In terms of assembly, interacts with CNOT1; promoting recruitment of the CCR4-NOT complex. Interacts with ribosomes. Interacts with eIF3 (EIF3A or EIF3B). Interacts with YTHDF3. Post-translationally, ubiquitinated by the CUL7-FBXW8 E3 ligase complex leading to degradation. Deubiquitinated and stabilized by USP5 by removing 'Lys-11'-linked polyubiquitination. In brain, preferentially expressed in the hippocampus.

It is found in the cytoplasm. The protein localises to the P-body. The protein resides in the stress granule. Specifically recognizes and binds N6-methyladenosine (m6A)-containing mRNAs, and regulates their stability. M6A is a modification present at internal sites of mRNAs and some non-coding RNAs and plays a role in mRNA stability and processing. Acts as a regulator of mRNA stability by promoting degradation of m6A-containing mRNAs via interaction with the CCR4-NOT complex. The YTHDF paralogs (YTHDF1, YTHDF2 and YTHDF3) share m6A-containing mRNAs targets and act redundantly to mediate mRNA degradation and cellular differentiation. Required to facilitate learning and memory formation in the hippocampus by binding to m6A-containing neuronal mRNAs. Acts as a regulator of axon guidance by binding to m6A-containing ROBO3 transcripts. Acts as a negative regulator of antigen cross-presentation in myeloid dendritic cells. In the context of tumorigenesis, negative regulation of antigen cross-presentation limits the anti-tumor response by reducing efficiency of tumor-antigen cross-presentation. Promotes formation of phase-separated membraneless compartments, such as P-bodies or stress granules, by undergoing liquid-liquid phase separation upon binding to mRNAs containing multiple m6A-modified residues: polymethylated mRNAs act as a multivalent scaffold for the binding of YTHDF proteins, juxtaposing their disordered regions and thereby leading to phase separation. The resulting mRNA-YTHDF complexes then partition into different endogenous phase-separated membraneless compartments, such as P-bodies, stress granules or neuronal RNA granules. The chain is YTH domain-containing family protein 1 from Mus musculus (Mouse).